The chain runs to 532 residues: 5-methylcytosine-modifying enzyme 1 (532 aa).

Residue 335-337 participates in L-ascorbate binding; it reads SLT. Fe cation-binding residues include H345, D347, and H397. 397-399 is an L-ascorbate binding site; sequence HGT.

Belongs to the TET family. Requires Fe(2+) as cofactor.

It is found in the nucleus. It carries out the reaction a 5-methyl-2'-deoxycytidine in DNA + L-ascorbate + O2 = a (8S,9S)-5-glyceryl-2'-deoxycytidine in DNA + glyoxylate + CO2. The catalysed reaction is a 5-methyl-2'-deoxycytidine in DNA + L-ascorbate + O2 = a (8S,9R)-5-glyceryl-2'-deoxycytidine in DNA + glyoxylate + CO2. Functionally, dioxygenase that catalyzes DNA modification by mediating the conversion of the modified genomic base 5-methylcytosine (5mC) into 5-glyceryl-methylcytosine (5gmC). Catalyzes the conjugation of a glyceryl moiety from L-ascorbate (vitamin C) to the methyl group of 5mC through a carbon-carbon bond. 5gmC DNA modification may be required during photosynthesis as an epigenetic mark that couteracts DNA methylation. This is 5-methylcytosine-modifying enzyme 1 from Chlamydomonas reinhardtii (Chlamydomonas smithii).